We begin with the raw amino-acid sequence, 79 residues long: uncharacterized protein (79 aa).

Residues 4–43 are a coiled coil; the sequence is QENEDLRKQLVEASELLKSQAKELKDAHQQQKLALQDFLE.

This is an uncharacterized protein from Homo sapiens (Human).